Consider the following 631-residue polypeptide: Pescadillo homolog (631 aa).

In terms of domain architecture, BRCT spans 321–414 (RLRTLFKGLK…QLLPTNDYFL (94 aa)). A compositionally biased stretch (basic and acidic residues) spans 428 to 442 (SKRDSYIPPEEKALH). 3 disordered regions span residues 428 to 471 (SKRD…EADQ), 489 to 561 (YKKY…VDEH), and 602 to 631 (ADNK…KLVK). Ser-453 and Ser-457 each carry phosphoserine. Composition is skewed to acidic residues over residues 453-471 (SEEE…EADQ) and 498-525 (VNED…EDVD). The span at 526 to 538 (EQTKRKQQEKEKM) shows a compositional bias: basic and acidic residues. Positions 544 to 553 (KVHKVNKRQV) are enriched in basic residues. The stretch at 591–631 (WLLRKKRRNIDADNKEAKKAAKREARKQAAEAAARAAKLVK) forms a coiled coil. The span at 602-619 (ADNKEAKKAAKREARKQA) shows a compositional bias: basic and acidic residues. A compositionally biased stretch (low complexity) spans 620–631 (AEAAARAAKLVK).

The protein belongs to the pescadillo family.

It is found in the nucleus. Its subcellular location is the nucleolus. The protein localises to the nucleoplasm. Functionally, required for maturation of ribosomal RNAs and formation of the large ribosomal subunit. The polypeptide is Pescadillo homolog (Drosophila pseudoobscura pseudoobscura (Fruit fly)).